We begin with the raw amino-acid sequence, 382 residues long: Chaperone protein DnaJ (382 aa).

Positions 5 to 70 (DFYEILGVPK…QKRAAYDQYG (66 aa)) constitute a J domain. The segment at 137–215 (GVTKEIRIPT…CHGHGRVEKT (79 aa)) adopts a CR-type zinc-finger fold. 8 residues coordinate Zn(2+): C150, C153, C167, C170, C189, C192, C203, and C206. CXXCXGXG motif repeat units follow at residues 150–157 (CDICHGSG), 167–174 (CPTCHGSG), 189–196 (CPHCHGRG), and 203–210 (CNKCHGHG).

It belongs to the DnaJ family. Homodimer. Zn(2+) serves as cofactor.

The protein resides in the cytoplasm. Functionally, participates actively in the response to hyperosmotic and heat shock by preventing the aggregation of stress-denatured proteins and by disaggregating proteins, also in an autonomous, DnaK-independent fashion. Unfolded proteins bind initially to DnaJ; upon interaction with the DnaJ-bound protein, DnaK hydrolyzes its bound ATP, resulting in the formation of a stable complex. GrpE releases ADP from DnaK; ATP binding to DnaK triggers the release of the substrate protein, thus completing the reaction cycle. Several rounds of ATP-dependent interactions between DnaJ, DnaK and GrpE are required for fully efficient folding. Also involved, together with DnaK and GrpE, in the DNA replication of plasmids through activation of initiation proteins. The chain is Chaperone protein DnaJ from Enterobacter sp. (strain 638).